The following is a 2372-amino-acid chain: NBAS subunit of NRZ tethering complex (2372 aa).

2 WD repeats span residues 119–158 and 304–343; these read DPNP…LFII and GEQD…LRGS. The segment at 447-468 is disordered; that stretch reads LESSVKGEEDDGDDDSDSDEEA. Residues 454 to 467 show a composition bias toward acidic residues; it reads EEDDGDDDSDSDEE. Positions 629–668 form a coiled coil; that stretch reads YEDFLSMEEELEQRKERESKKRQELLKKVDFSKLTLEQKE.

The protein localises to the endoplasmic reticulum. Involved in Golgi-to-endoplasmic reticulum (ER) retrograde transport; the function is proposed to depend on its association in the NRZ complex which is believed to play a role in SNARE assembly at the ER. Required for normal embryonic development. May play a role in the nonsense-mediated decay pathway of mRNAs containing premature stop codons. The sequence is that of NBAS subunit of NRZ tethering complex from Danio rerio (Zebrafish).